The chain runs to 546 residues: Chaperonin GroEL 2 (546 aa).

ATP is bound by residues 29 to 32 (TLGP), 86 to 90 (DGTTT), Gly-418, 482 to 484 (NAA), and Asp-498.

This sequence belongs to the chaperonin (HSP60) family. As to quaternary structure, forms a cylinder of 14 subunits composed of two heptameric rings stacked back-to-back. Interacts with the co-chaperonin GroES.

Its subcellular location is the cytoplasm. The catalysed reaction is ATP + H2O + a folded polypeptide = ADP + phosphate + an unfolded polypeptide.. Its function is as follows. Together with its co-chaperonin GroES, plays an essential role in assisting protein folding. The GroEL-GroES system forms a nano-cage that allows encapsulation of the non-native substrate proteins and provides a physical environment optimized to promote and accelerate protein folding. This is Chaperonin GroEL 2 from Corynebacterium diphtheriae (strain ATCC 700971 / NCTC 13129 / Biotype gravis).